Consider the following 241-residue polypeptide: Zinc finger CCHC domain-containing protein 17 (241 aa).

Positions 16–88 constitute an S1 motif domain; it reads YTIFQGEVAM…DRIKVSLSMK (73 aa). Ser-114 carries the phosphoserine modification. The CCHC-type zinc finger occupies 131-148; the sequence is TTCKKCGCKGHFAKDCFM. Lys-144 is modified (N6-acetyllysine). The interval 161 to 241 is disordered; it reads EEEEKEEAKS…KKKHKKKHKE (81 aa). Residues 166–178 show a composition bias toward basic and acidic residues; sequence EEAKSAEFEKPDP. The segment covering 182–198 has biased composition (basic residues); the sequence is PSRKRKKEKKKKKHRDR. At Ser-183 the chain carries Phosphoserine. Residues 211-225 are compositionally biased toward basic and acidic residues; the sequence is DTGKRARHTSKDSKA. Residues 226-241 are compositionally biased toward basic residues; it reads AKKKKKKKKHKKKHKE.

In terms of assembly, interacts with PNN. Associates with the 60S ribosomal subunit.

It localises to the nucleus. It is found in the nucleolus. The polypeptide is Zinc finger CCHC domain-containing protein 17 (ZCCHC17) (Homo sapiens (Human)).